The chain runs to 97 residues: uncharacterized protein (97 aa).

3 helical membrane passes run 7 to 27 (CIAP…IGLG), 34 to 54 (IPML…LMFS), and 69 to 89 (IVLY…PTIL).

Its subcellular location is the cell membrane. This is an uncharacterized protein from Haemophilus influenzae (strain ATCC 51907 / DSM 11121 / KW20 / Rd).